The sequence spans 218 residues: Protein-methionine-sulfoxide reductase heme-binding subunit MsrQ (218 aa).

A run of 5 helical transmembrane segments spans residues 14 to 34 (AVHA…WQVW), 60 to 80 (LLLI…AVLI), 86 to 106 (LGLY…WLDL), 121 to 141 (PYIT…ITST), and 155 to 175 (LHML…WLVK).

It belongs to the MsrQ family. As to quaternary structure, heterodimer of a catalytic subunit (MsrP) and a heme-binding subunit (MsrQ). Requires FMN as cofactor. It depends on heme b as a cofactor.

The protein resides in the cell inner membrane. Its function is as follows. Part of the MsrPQ system that repairs oxidized periplasmic proteins containing methionine sulfoxide residues (Met-O), using respiratory chain electrons. Thus protects these proteins from oxidative-stress damage caused by reactive species of oxygen and chlorine generated by the host defense mechanisms. MsrPQ is essential for the maintenance of envelope integrity under bleach stress, rescuing a wide series of structurally unrelated periplasmic proteins from methionine oxidation. MsrQ provides electrons for reduction to the reductase catalytic subunit MsrP, using the quinone pool of the respiratory chain. This Xanthomonas campestris pv. campestris (strain 8004) protein is Protein-methionine-sulfoxide reductase heme-binding subunit MsrQ.